A 246-amino-acid polypeptide reads, in one-letter code: Homeobox protein SIX6 (246 aa).

The segment at residues 128-187 (GEQKTHCFKERTRHLLREWYLQDPYPNPSKKRELAQATGLTPTQVGNWFKNRRQRDRAAA) is a DNA-binding region (homeobox). Positions 190-246 (NRLQQQVLSQGSGRALRAEGDGTPEVLGVATSPAASLSSKAATSAISITSSDSECDI) are disordered. The segment covering 191–201 (RLQQQVLSQGS) has biased composition (polar residues). At Thr212 the chain carries Phosphothreonine. The segment covering 219 to 246 (ATSPAASLSSKAATSAISITSSDSECDI) has biased composition (low complexity). 4 positions are modified to phosphoserine: Ser221, Ser225, Ser227, and Ser228.

Belongs to the SIX/Sine oculis homeobox family. In terms of assembly, interacts with TLE4 and TLE5. In terms of tissue distribution, expressed in the developing and adult retina. Also expressed in the hypothalamic and the pituitary regions.

It localises to the nucleus. Functionally, may be involved in eye development. In Homo sapiens (Human), this protein is Homeobox protein SIX6 (SIX6).